The primary structure comprises 104 residues: Large ribosomal subunit protein uL24 (104 aa).

This sequence belongs to the universal ribosomal protein uL24 family. Part of the 50S ribosomal subunit.

In terms of biological role, one of two assembly initiator proteins, it binds directly to the 5'-end of the 23S rRNA, where it nucleates assembly of the 50S subunit. Functionally, one of the proteins that surrounds the polypeptide exit tunnel on the outside of the subunit. The chain is Large ribosomal subunit protein uL24 from Buchnera aphidicola subsp. Baizongia pistaciae (strain Bp).